The sequence spans 264 residues: uncharacterized protein (264 aa).

A helical membrane pass occupies residues 7–27 (LTLGICLVLLIILIVGYVIMT).

Belongs to the staphylococcal tandem lipoprotein family.

The protein resides in the cell membrane. This is an uncharacterized protein from Staphylococcus aureus (strain N315).